The primary structure comprises 318 residues: MKSQVQPKLIIHGGAGSSLHGKGGLEAVRQTLHAVVEEVYALLLSGVNASVAVVRGCQLLEDEPRFNAGTGSVLQSDGQIRMSASIMDGALGRFSGVINVSRVKNPIELAQFLQNSPDRVLSDYGSAELAREMQIPSYNALTELRLQEWIQERQDNFKRTMAGVIAEPELLETSNAGRGTIGVVALDTYGKLAVGTSTGGKGFERIGRVSDSAMPAGNYATSYAAVSCTGIGEDIIDECLAPKIVIRVTDGLSLQDSMQRSFAEAHDNKRDFGAIALDANGAIAWGKTCDIILAAFHDGEKIGDTLELAVGTQVGSIS.

Thr-180 serves as the catalytic Nucleophile. Residues 208–211 (RVSD) and 229–232 (TGIG) contribute to the substrate site.

Belongs to the Ntn-hydrolase family. Heterotetramer of two alpha and two beta chains arranged as a dimer of alpha/beta heterodimers. Cleaved into an alpha and beta chain by autocatalysis; this activates the enzyme. The N-terminal residue of the beta subunit is responsible for the nucleophile hydrolase activity.

The catalysed reaction is Cleavage of a beta-linked Asp residue from the N-terminus of a polypeptide.. Degrades proteins damaged by L-isoaspartyl residue formation (also known as beta-Asp residues). Probably performs the final step in the degradation of the reserve polymer cyanophycin (depolymerizes the building block L-beta-Asp-Arg). Also has L-asparaginase activity. The protein is Isoaspartyl peptidase/L-asparaginase of Nostoc sp. (strain PCC 7120 / SAG 25.82 / UTEX 2576).